Consider the following 375-residue polypeptide: Alanine racemase, catabolic (375 aa).

K38 acts as the Proton acceptor; specific for D-alanine in catalysis. Position 38 is an N6-(pyridoxal phosphate)lysine (K38). The active-site Proton acceptor; specific for L-alanine is the Y269.

Belongs to the alanine racemase family. Pyridoxal 5'-phosphate is required as a cofactor.

The catalysed reaction is L-alanine = D-alanine. It participates in amino-acid biosynthesis; D-alanine biosynthesis; D-alanine from L-alanine: step 1/1. The sequence is that of Alanine racemase, catabolic (alr1) from Schizosaccharomyces pombe (strain 972 / ATCC 24843) (Fission yeast).